An 879-amino-acid chain; its full sequence is MAGGGGDLSTRRLNECISPVANEMNHLPAHSHDLQRMFTEDQGVDDRLLYDIVFKHFKRNKVEISNAIKKTFPFLEGLRDRDLITNKMFEDSQDSCRNLVPVQRVVYNVLSELEKTFNLPVLEALFSDVNMQEYPDLIHIYKGFENVIHDKLPLQESEEEEREERSGLQLSLEQGTGENSFRSLTWPPSGSPSHAGTTPPENGLSEHPCETEQINAKRKDTTSDKDDSLGSQQTNEQCAQKAEPTESCEQIAVQVNNGDAGREMPCPLPCDEESPEAELHNHGIQINSCSVRLVDIKKEKPFSNSKVECQAQARTHHNQASDIIVISSEDSEGSTDVDEPLEVFISAPRSEPVINNDNPLESNDEKEGQEATCSRPQIVPEPMDFRKLSTFRESFKKRVIGQDHDFSESSEEEAPAEASSGALRSKHGEKAPMTSRSTSTWRIPSRKRRFSSSDFSDLSNGEELQETCSSSLRRGSGSQPQEPENKKCSCVMCFPKGVPRSQEARTESSQASDMMDTMDVENNSTLEKHSGKRRKKRRHRSKVNGLQRGRKKDRPRKHLTLNNKVQKKRWQQRGRKANTRPLKRRRKRGPRIPKDENINFKQSELPVTCGEVKGTLYKERFKQGTSKKCIQSEDKKWFTPREFEIEGDRGASKNWKLSIRCGGYTLKVLMENKFLPEPPSTRKKRILESHNNTLVDPCEEHKKKNPDASVKFSEFLKKCSETWKTIFAKEKGKFEDMAKADKAHYEREMKTYIPPKGEKKKKFKDPNAPKRPPLAFFLFCSEYRPKIKGEHPGLSIDDVVKKLAGMWNNTAAADKQFYEKKAAKLKEKYKKDIAAYRAKGKPNSAKKRVVKAEKSKKKKEEEEDEEDEQEEENEEDDDK.

At Ala-2 the chain carries N-acetylalanine. Ser-18 carries the phosphoserine modification. In terms of domain architecture, HSR spans 33 to 149; sequence DLQRMFTEDQ…IYKGFENVIH (117 aa). The tract at residues 154–245 is disordered; it reads LQESEEEERE…EQCAQKAEPT (92 aa). The residue at position 157 (Ser-157) is a Phosphoserine. Residues 165-168 carry the D-box; recognition signal for CDC20-mediated degradation motif; the sequence is RSGL. Phosphoserine is present on residues Ser-171, Ser-180, and Ser-228. Polar residues predominate over residues 176-200; it reads TGENSFRSLTWPPSGSPSHAGTTPP. Residues 207–228 show a composition bias toward basic and acidic residues; sequence HPCETEQINAKRKDTTSDKDDS. The segment covering 229-238 has biased composition (polar residues); sequence LGSQQTNEQC. A Glycyl lysine isopeptide (Lys-Gly) (interchain with G-Cter in SUMO2) cross-link involves residue Lys-241. A PxVxL motif motif is present at residues 284-297; the sequence is IQINSCSVRLVDIK. Residue Lys-297 forms a Glycyl lysine isopeptide (Lys-Gly) (interchain with G-Cter in SUMO) linkage. Glycyl lysine isopeptide (Lys-Gly) (interchain with G-Cter in SUMO2) cross-links involve residues Lys-300 and Lys-306. A phosphoserine mark is found at Ser-331 and Ser-362. The tract at residues 333–478 is sufficient to mediate interaction with ETS1; that stretch reads GSTDVDEPLE…SSSLRRGSGS (146 aa). Positions 345 to 386 are disordered; that stretch reads ISAPRSEPVINNDNPLESNDEKEGQEATCSRPQIVPEPMDFR. Glycyl lysine isopeptide (Lys-Gly) (interchain with G-Cter in SUMO2) cross-links involve residues Lys-366 and Lys-387. 5 positions are modified to phosphoserine: Ser-394, Ser-407, Ser-409, Ser-410, and Ser-451. The disordered stretch occupies residues 401 to 596; that stretch reads GQDHDFSESS…KRGPRIPKDE (196 aa). Over residues 466–482 the composition is skewed to polar residues; the sequence is ETCSSSLRRGSGSQPQE. A compositionally biased stretch (basic residues) spans 530–591; it reads SGKRRKKRRH…LKRRRKRGPR (62 aa). 2 short sequence motifs (nuclear localization signal) span residues 536–553 and 568–592; these read KRRH…RKKD and KRWQ…GPRI. Lys-594 participates in a covalent cross-link: Glycyl lysine isopeptide (Lys-Gly) (interchain with G-Cter in SUMO2). Residues 595–676 form the SAND domain; that stretch reads DENINFKQSE…KVLMENKFLP (82 aa). 2 consecutive DNA-binding regions (HMG box) follow at residues 677–753 and 769–837; these read EPPS…KTYI and PKRP…AAYR. The Nuclear localization signal signature appears at 717–734; sequence KKCSETWKTIFAKEKGKF. The disordered stretch occupies residues 835–879; the sequence is AYRAKGKPNSAKKRVVKAEKSKKKKEEEEDEEDEQEEENEEDDDK. Positions 838-857 are enriched in basic residues; that stretch reads AKGKPNSAKKRVVKAEKSKK. A compositionally biased stretch (acidic residues) spans 861 to 879; the sequence is EEEDEEDEQEEENEEDDDK.

In terms of assembly, homodimer; isoforms are able to heterodimerize. Interacts with members of the HP1 family of nonhistone chromosomal protein, such as CBX5 and CBX3 via the PxVxL motif. Interacts with ETS1; the interaction is direct and modulates ETS1 transcriptional activity. Interacts with the MRN complex which is composed of two heterodimers RAD50/MRE11 associated with a single NBN; recruits the complex to PML-related bodies. Interacts with HIPK2; positively regulates TP53-dependent transcription. Interacts with CASP8AP2; may negatively regulate CASP8AP2 export from the nucleus to the cytoplasm. Interacts with SUMO1P1/SUMO5. As to quaternary structure, (Microbial infection) Interacts with Epstein-Barr virus EBNA-LP; this interaction is important for EBNA-LP coactivator activity. (Microbial infection) Interacts with human cytomegalovirus/HHV-5 protein UL123; may play a role in infection by the virus. Post-translationally, sumoylated. Sumoylation depends on a functional nuclear localization signal but is not necessary for nuclear import or nuclear body targeting. In terms of processing, sumoylated. Sumoylated with SUMO1. Sumoylation depends on a functional nuclear localization signal but is not necessary for nuclear import or nuclear body targeting. Sumoylation may stabilize the interaction with CBX5. (Microbial infection) Immediate early protein IE1 of human cytomegalovirus (HHV-5) interferes with the sumoylation of SP100. Widely expressed. Sp100-B is expressed only in spleen, tonsil, thymus, mature B-cell line and some T-cell line, but not in brain, liver, muscle or non-lymphoid cell lines.

The protein resides in the nucleus. Its subcellular location is the PML body. It localises to the nuclear body. The protein localises to the cytoplasm. Functionally, together with PML, this tumor suppressor is a major constituent of the PML bodies, a subnuclear organelle involved in a large number of physiological processes including cell growth, differentiation and apoptosis. Functions as a transcriptional coactivator of ETS1 and ETS2 according to PubMed:11909962. Under certain conditions, it may also act as a corepressor of ETS1 preventing its binding to DNA according to PubMed:15247905. Through the regulation of ETS1 it may play a role in angiogenesis, controlling endothelial cell motility and invasion. Through interaction with the MRN complex it may be involved in the regulation of telomeres lengthening. May also regulate TP53-mediated transcription and through CASP8AP2, regulate FAS-mediated apoptosis. Also plays a role in infection by viruses, including human cytomegalovirus and Epstein-Barr virus, through mechanisms that may involve chromatin and/or transcriptional regulation. The polypeptide is Nuclear autoantigen Sp-100 (SP100) (Homo sapiens (Human)).